The following is a 390-amino-acid chain: MQALINNVTHSFTSIFGYAPTHFIQAPGRVNLIGEHTDYNDGFVLPCAIDYQMVVAAAKRDDNLIRVIAVDYQNAQDQFSLEHPIEFLPNKMWANYIRGVIHFLQQAKYVFQGMDIAITGNVPQGAGLSSSAALEVAIGQTVKTLYQLPISQKEIALNGQKAENQFVGCNCGIMDQLISACGEESHALLIDCRSLATTAVKMPESAVVMIINSNKKRGLVDSEYNTRRQQCEEAAKILNVTALRDATLAQLQAKKALMNDKVYRRARHVITENERTLQAAEALKQGDLTKLSELMAQSHISMRDDFEITVNEVDTLVEIVKSVIGSQGGVRMTGGGFGGCVVALVTPDLVAKVTQAVEAQYKKQTGLKETIYVCSASQGAGYLEITNGIK.

A substrate-binding site is contributed by 35–38 (EHTD). Position 125–131 (125–131 (GAGLSSS)) interacts with ATP. Mg(2+)-binding residues include Ser-131 and Glu-163. Residue Asp-175 is the Proton acceptor of the active site. Tyr-224 is a substrate binding site.

This sequence belongs to the GHMP kinase family. GalK subfamily.

It is found in the cytoplasm. The enzyme catalyses alpha-D-galactose + ATP = alpha-D-galactose 1-phosphate + ADP + H(+). It functions in the pathway carbohydrate metabolism; galactose metabolism. Its function is as follows. Catalyzes the transfer of the gamma-phosphate of ATP to D-galactose to form alpha-D-galactose-1-phosphate (Gal-1-P). The chain is Galactokinase from Proteus mirabilis (strain HI4320).